A 408-amino-acid chain; its full sequence is Aminoacylase-1 (408 aa).

H80 is a Zn(2+) binding site. Residue D82 is part of the active site. D113 is a binding site for Zn(2+). The active-site Proton acceptor is the E147. Zn(2+)-binding residues include E148, E175, and H373.

The protein belongs to the peptidase M20A family. As to quaternary structure, homodimer. Interacts with SPHK1. It depends on Zn(2+) as a cofactor. Expression is highest in kidney, strong in brain and weaker in placenta and spleen.

The protein resides in the cytoplasm. The catalysed reaction is an N-acyl-L-amino acid + H2O = an L-alpha-amino acid + a carboxylate. It catalyses the reaction N-acetyl-L-methionine + H2O = L-methionine + acetate. The enzyme catalyses N-acetyl-L-glutamine + H2O = L-glutamine + acetate. Catalyzes the hydrolysis of N-acetylated amino acids to acetate and free amino acids. This is Aminoacylase-1 (ACY1) from Homo sapiens (Human).